A 360-amino-acid polypeptide reads, in one-letter code: Peptide chain release factor 1 (360 aa).

Gln-233 carries the N5-methylglutamine modification. A disordered region spans residues 283 to 305 (KLDAERAADRRSQVGSGDRSERI).

This sequence belongs to the prokaryotic/mitochondrial release factor family. In terms of processing, methylated by PrmC. Methylation increases the termination efficiency of RF1.

The protein localises to the cytoplasm. In terms of biological role, peptide chain release factor 1 directs the termination of translation in response to the peptide chain termination codons UAG and UAA. In Methylocella silvestris (strain DSM 15510 / CIP 108128 / LMG 27833 / NCIMB 13906 / BL2), this protein is Peptide chain release factor 1.